We begin with the raw amino-acid sequence, 160 residues long: MAFTFAAFCYMLSLVLCAALIFFAIWHIIAFDELRTDFKSPIDQCNPVHARERLRNIERICFLLRKLVLPEYSIHSLFCIMFLCAQEWLTLGLNVPLLFYHFWRYFHCPADSSELAYDPPVVMNADTLSYCQKEAWCKLAFYLLSFFYYLYCMIYTLVSS.

The Cytoplasmic segment spans residues 1–10 (MAFTFAAFCY). The chain crosses the membrane as a helical span at residues 11 to 31 (MLSLVLCAALIFFAIWHIIAF). Topologically, residues 32 to 72 (DELRTDFKSPIDQCNPVHARERLRNIERICFLLRKLVLPEY) are lumenal. The helical transmembrane segment at 73 to 93 (SIHSLFCIMFLCAQEWLTLGL) threads the bilayer. The Cytoplasmic segment spans residues 94–138 (NVPLLFYHFWRYFHCPADSSELAYDPPVVMNADTLSYCQKEAWCK). The chain crosses the membrane as a helical span at residues 139–159 (LAFYLLSFFYYLYCMIYTLVS). Position 160 (Ser160) is a topological domain, lumenal.

Belongs to the cornichon family. In terms of assembly, acts as an auxiliary subunit for AMPA-selective glutamate receptors (AMPARs). Found in a complex with GRIA1, GRIA2, GRIA3, GRIA4, CNIH2, CACNG2, CACNG3, CACNG4, CACNG5, CACNG7 and CACNG8. In terms of tissue distribution, expression is up-regulated in dorsolateral prefrontal cortex of patients with schizophrenia (postmortem brain study).

Its subcellular location is the postsynaptic cell membrane. Regulates the trafficking and gating properties of AMPA-selective glutamate receptors (AMPARs). Promotes their targeting to the cell membrane and synapses and modulates their gating properties by regulating their rates of activation, deactivation and desensitization. The chain is Protein cornichon homolog 3 (CNIH3) from Homo sapiens (Human).